Here is a 154-residue protein sequence, read N- to C-terminus: CASP-like protein 5B2 (154 aa).

Topologically, residues 1–17 are cytoplasmic; that stretch reads MAGLAGRPGSWGGLVLR. Residues 18-38 traverse the membrane as a helical segment; the sequence is VGQALFAAACIGVMGSSLGFA. The Extracellular segment spans residues 39–42; that stretch reads SYTA. Residues 43-63 traverse the membrane as a helical segment; sequence FCYLIASMGLQMLWSFGLACL. The Cytoplasmic portion of the chain corresponds to 64 to 87; it reads DGYAIRANKDLTSPILLSLFVVGD. A helical transmembrane segment spans residues 88–107; the sequence is WVTAILSFAASSSAAGVVIL. Over 108–130 the chain is Extracellular; sequence FQKDVLFCRRYPQLPCGKYELAT. A helical membrane pass occupies residues 131–151; that stretch reads AFAFLSWALSATSALIMFWLL. Residues 152–154 are Cytoplasmic-facing; the sequence is AAF.

This sequence belongs to the Casparian strip membrane proteins (CASP) family. In terms of assembly, homodimer and heterodimers.

The protein resides in the cell membrane. In Zea mays (Maize), this protein is CASP-like protein 5B2.